A 414-amino-acid chain; its full sequence is Dual-specificity RNA methyltransferase RlmN (414 aa).

Residues 1–20 (MMSTPETATEATAPEAAPAP) show a composition bias toward low complexity. Residues 1 to 24 (MMSTPETATEATAPEAAPAPSLGA) form a disordered region. The active-site Proton acceptor is the glutamate 129. The Radical SAM core domain occupies 135 to 385 (ESDRGTLCVS…VRTPRGRDIL (251 aa)). An intrachain disulfide couples cysteine 142 to cysteine 388. [4Fe-4S] cluster contacts are provided by cysteine 149, cysteine 153, and cysteine 156. Residues 214–215 (GE), serine 246, 268–270 (SLH), and asparagine 345 contribute to the S-adenosyl-L-methionine site. Cysteine 388 functions as the S-methylcysteine intermediate in the catalytic mechanism.

This sequence belongs to the radical SAM superfamily. RlmN family. [4Fe-4S] cluster serves as cofactor.

Its subcellular location is the cytoplasm. The enzyme catalyses adenosine(2503) in 23S rRNA + 2 reduced [2Fe-2S]-[ferredoxin] + 2 S-adenosyl-L-methionine = 2-methyladenosine(2503) in 23S rRNA + 5'-deoxyadenosine + L-methionine + 2 oxidized [2Fe-2S]-[ferredoxin] + S-adenosyl-L-homocysteine. The catalysed reaction is adenosine(37) in tRNA + 2 reduced [2Fe-2S]-[ferredoxin] + 2 S-adenosyl-L-methionine = 2-methyladenosine(37) in tRNA + 5'-deoxyadenosine + L-methionine + 2 oxidized [2Fe-2S]-[ferredoxin] + S-adenosyl-L-homocysteine. In terms of biological role, specifically methylates position 2 of adenine 2503 in 23S rRNA and position 2 of adenine 37 in tRNAs. m2A2503 modification seems to play a crucial role in the proofreading step occurring at the peptidyl transferase center and thus would serve to optimize ribosomal fidelity. The sequence is that of Dual-specificity RNA methyltransferase RlmN from Xanthobacter autotrophicus (strain ATCC BAA-1158 / Py2).